We begin with the raw amino-acid sequence, 437 residues long: Sodium/bile acid cotransporter 4 (437 aa).

The Extracellular portion of the chain corresponds to 1-103 (MDGNDNVTLL…LPFWDTPLNH (103 aa)). N-linked (GlcNAc...) asparagine glycans are attached at residues Asn-6, Asn-18, and Asn-24. The tract at residues 37–82 (APASSAGPGPGLSLGPGPSFGFSPGPTPTPEPTTSGLAGGAASHGP) is disordered. Over residues 51–60 (GPGPSFGFSP) the composition is skewed to low complexity. The chain crosses the membrane as a helical span at residues 104 to 124 (GLNVFVGAALCITMLGLGCTV). Residues 125-140 (DVNHFGAHVRRPVGAL) are Cytoplasmic-facing. The chain crosses the membrane as a helical span at residues 141 to 161 (LAALCQFGLLPLLAFLLALAF). The Extracellular portion of the chain corresponds to 162–197 (KLDEVAAVAVLLCGCCPGGNLSNLMSLLVDGDMNLS). N-linked (GlcNAc...) asparagine glycosylation is found at Asn-181 and Asn-195. A helical transmembrane segment spans residues 198 to 218 (IIMTISSTLLALVLMPLCLWI). Over 219–233 (YSWAWINTPIVQLLP) the chain is Cytoplasmic. The chain crosses the membrane as a helical span at residues 234–254 (LGTVTLTLCSTLIPIGLGVFI). Over 255–267 (RYKYSRVADYIVK) the chain is Extracellular. The chain crosses the membrane as a helical span at residues 268–288 (VSLWSLLVTLVVLFIMTGTML). Residues 289–291 (GPE) lie on the Cytoplasmic side of the membrane. A helical transmembrane segment spans residues 292-312 (LLASIPAAVYVIAIFMPLAGY). Over 313 to 360 (ASGYGLATLFHLPPNCKRTVCLETGSQNVQLCTAILKLAFPPQFIGSM) the chain is Extracellular. Residues 361–381 (YMFPLLYALFQSAEAGIFVLI) form a helical membrane-spanning segment. At 382–437 (YKMYGSEMLHKRDPLDEDEDTDISYKKLKEEEMADTSYGTVKAENIIMMETAQTSL) the chain is on the cytoplasmic side.

This sequence belongs to the bile acid:sodium symporter (BASS) (TC 2.A.28) family. In terms of processing, activated following N-terminal proteolytic cleavage by thrombin and/or proteases. As to expression, highly expressed in brain and small intestine, and moderately expressed in colon, heart, prostate, and testis. Very low levels were detected in kidney, liver, ovary, placenta, spleen, and thymus.

It localises to the cell membrane. Transporter for bile acids. This Homo sapiens (Human) protein is Sodium/bile acid cotransporter 4 (SLC10A4).